The primary structure comprises 569 residues: Acyl-CoA transferase FVEG_12629 (569 aa).

The protein belongs to the CoA-transferase III family.

In terms of biological role, acyl-CoA transferase; part of the Fusarium detoxification of benzoxazolinone cluster 2 (FDB2) involved in the degradation of benzoxazolinones produced by the host plant. Maize, wheat, and rye produce the 2 benzoxazinone phytoanticipins 2,4-dihy-droxy-7-methoxy-1,4-benzoxazin-3-one (DIMBOA) and 2,4-dihydroxy-1,4-benzoxazin-3-one (DIBOA) that, due to their inherent instability once released, spontaneously degrade to the more stable corresponding benzoxazolinones, 6-methoxy-2-benzoxazolinone (MBOA) and 2-benzoxazolinone (BOA), respectively. The first step in the detoxification of benzoxazolinones involves the hydrolysis of the cyclic ester bond of benzoxazolinones by the FDB1 cluster gamma-lactamase MBL1 to aminophenols. MBL1 is able to convert BOA into 2-aminophenol (2-AP), as well as MBOA into 5-methoxy-2-aminophenol (2-AMP). The FDB2 cluster N-malonyltransferase FDB2/NAT1 then metabolizes aminophenols via N-malonylation to non-toxic malonamic acids. FDB2/NAT1 converts 2-AP into N-(2-hydroxyphenyl) malonamic acid (HPMA) and 2-AMP into N-(2-hydroxy-4-methoxyphenyl) malonamic acid (HMPMA). The duplicated dienlactone hydrolases DLH1 and DLH2 may provide redundant function for hydrolyzing the lactone moiety in the BOA molecule. The roles of the amidases an other enzymes encoded by the 2 FDB clusters have not been identified so far. The chain is Acyl-CoA transferase FVEG_12629 from Gibberella moniliformis (strain M3125 / FGSC 7600) (Maize ear and stalk rot fungus).